Consider the following 654-residue polypeptide: Heat shock 70 kDa protein 2 (654 aa).

A compositionally biased stretch (gly residues) spans 612 to 646 (AGGEGGAPGAGFPGAGGPGGFPGAGAGGAHSGGDD). The disordered stretch occupies residues 612–654 (AGGEGGAPGAGFPGAGGPGGFPGAGAGGAHSGGDDGPTVEEVD).

It belongs to the heat shock protein 70 family.

This Paracoccidioides lutzii (strain ATCC MYA-826 / Pb01) (Paracoccidioides brasiliensis) protein is Heat shock 70 kDa protein 2 (HSP70-2).